The primary structure comprises 1288 residues: Mitogen-activated protein kinase kinase kinase 6 (1288 aa).

The Protein kinase domain maps to T648–L906. Residues L654–V662 and K677 each bind ATP. The active-site Proton acceptor is D771. Residue T806 is modified to Phosphothreonine. Residues T899–E997 are disordered. Residues S914–S952 show a composition bias toward low complexity. A phosphoserine mark is found at S964 and S984. Residues E980–S989 are compositionally biased toward low complexity. Positions L1004–A1029 form a coiled coil. Residues V1123–E1134 are compositionally biased toward basic and acidic residues. The disordered stretch occupies residues V1123–Q1157. Phosphoserine is present on residues S1129 and S1149. Low complexity predominate over residues S1141–L1151. Residues L1166–Y1205 adopt a coiled-coil conformation.

It belongs to the protein kinase superfamily. STE Ser/Thr protein kinase family. MAP kinase kinase kinase subfamily. As to quaternary structure, binds both upstream activators and downstream substrates in multimolecular complexes. Mg(2+) is required as a cofactor.

The catalysed reaction is L-seryl-[protein] + ATP = O-phospho-L-seryl-[protein] + ADP + H(+). It carries out the reaction L-threonyl-[protein] + ATP = O-phospho-L-threonyl-[protein] + ADP + H(+). Activated by phosphorylation on Thr-806. Catalytically active only when complexed with MAP3K5, with MAP3K5 supporting the stability and the active configuration of MAP3K6 and MAP3K6 activating MAP3K5 by direct phosphorylation. Component of a protein kinase signal transduction cascade. Activates the JNK, but not ERK or p38 kinase pathways. This Homo sapiens (Human) protein is Mitogen-activated protein kinase kinase kinase 6 (MAP3K6).